A 158-amino-acid chain; its full sequence is Placenta growth factor (158 aa).

An N-terminal signal peptide occupies residues 1–18; the sequence is MLVMKLFTCFLQVLAGLA. N-linked (GlcNAc...) asparagine glycosylation is found at Asn29 and Asn30. Intrachain disulfides connect Cys48/Cys90, Cys79/Cys125, and Cys83/Cys127. Residue Asn97 is glycosylated (N-linked (GlcNAc...) asparagine). Residues 136–158 are disordered; that stretch reads AERRKTKGKRKRSRNSQTEEPHP. Residues 137 to 149 are compositionally biased toward basic residues; that stretch reads ERRKTKGKRKRSR.

It belongs to the PDGF/VEGF growth factor family. In terms of assembly, antiparallel homodimer; disulfide-linked. Also found as heterodimer with VEGFA/VEGF.

The protein localises to the secreted. Its function is as follows. Growth factor active in angiogenesis and endothelial cell growth, stimulating their proliferation and migration. It binds to the receptor FLT1/VEGFR-1. Also promotes cell tumor growth. The chain is Placenta growth factor (Pgf) from Mus musculus (Mouse).